Reading from the N-terminus, the 105-residue chain is Heme oxygenase (mycobilin-producing) (105 aa).

The region spanning 3-92 is the ABM domain; sequence VVKINAIEVP…VATGASLLEF (90 aa). Heme-binding positions include 22–26, H75, and 83–86; these read RFAHR and VATG.

The protein belongs to the antibiotic biosynthesis monooxygenase family. In terms of assembly, homodimer.

The catalysed reaction is heme b + 3 AH2 + 3 O2 + 2 H(+) = mycobilin a + Fe(2+) + 3 A + 3 H2O. It catalyses the reaction heme b + 3 AH2 + 3 O2 + 2 H(+) = mycobilin b + Fe(2+) + 3 A + 3 H2O. Functionally, catalyzes the oxidative degradation of the heme macrocyclic porphyrin ring in the presence of a suitable electron donor such as ascorbate or NADPH--cytochrome P450 reductase, with subsequent release of free iron. This chain is Heme oxygenase (mycobilin-producing) (mhuD), found in Mycobacterium tuberculosis (strain CDC 1551 / Oshkosh).